Consider the following 471-residue polypeptide: Mannose-1-phosphate guanylyltransferase (471 aa).

Belongs to the mannose-6-phosphate isomerase type 2 family.

It catalyses the reaction alpha-D-mannose 1-phosphate + GTP + H(+) = GDP-alpha-D-mannose + diphosphate. It functions in the pathway nucleotide-sugar biosynthesis; GDP-alpha-D-mannose biosynthesis; GDP-alpha-D-mannose from alpha-D-mannose 1-phosphate (GTP route): step 1/1. The protein operates within bacterial outer membrane biogenesis; LPS O-antigen biosynthesis. In terms of biological role, involved in GDP-mannose biosynthesis which serves as the activated sugar nucleotide precursor for mannose residues in cell surface polysaccharides. This enzyme participates in synthesis of the LPS O9 antigen. The chain is Mannose-1-phosphate guanylyltransferase (manC) from Escherichia coli.